Reading from the N-terminus, the 163-residue chain is GPI-anchored protein LLG2 (163 aa).

Positions 1 to 23 (MEISPYCLLSLLPIFLLSGFSLS) are cleaved as a signal peptide. Asn-52 carries N-linked (GlcNAc...) asparagine glycosylation. Ser-135 carries GPI-anchor amidated serine lipidation. The propeptide at 136-163 (DSIPRASTTASLAVLSTFLVLCLLFLSS) is removed in mature form.

In terms of tissue distribution, expressed in pollen, pollen tubes, sporophytic pistil tissues, in the early stages of female gametophyte development, and in unfertilized, mature ovules.

It is found in the cell membrane. This Arabidopsis thaliana (Mouse-ear cress) protein is GPI-anchored protein LLG2.